The following is a 168-amino-acid chain: Peptide deformylase (168 aa).

Cys92 and His134 together coordinate Fe cation. The active site involves Glu135. His138 contributes to the Fe cation binding site.

This sequence belongs to the polypeptide deformylase family. Fe(2+) serves as cofactor.

It catalyses the reaction N-terminal N-formyl-L-methionyl-[peptide] + H2O = N-terminal L-methionyl-[peptide] + formate. In terms of biological role, removes the formyl group from the N-terminal Met of newly synthesized proteins. Requires at least a dipeptide for an efficient rate of reaction. N-terminal L-methionine is a prerequisite for activity but the enzyme has broad specificity at other positions. The sequence is that of Peptide deformylase from Stutzerimonas stutzeri (strain A1501) (Pseudomonas stutzeri).